Consider the following 577-residue polypeptide: Protein hinderin (577 aa).

Ser21 carries the post-translational modification Phosphoserine. Residues 91 to 167 (LKDLCLEDKR…CQELLSLYQK (77 aa)) adopt a coiled-coil conformation. At Ser179 the chain carries Phosphoserine. The segment at 251 to 282 (TLHHPKDDLDKIPSETTTCNCESPGRKPAVPT) is disordered. Residues 254–263 (HPKDDLDKIP) are compositionally biased toward basic and acidic residues. Residues 358 to 402 (LKKQISEDRKQQLMLQKMELEIEKERLQHLLAQQETKLLLKQQQL) adopt a coiled-coil conformation. Disordered stretches follow at residues 425–444 (SSSI…RKER), 449–492 (FHSH…GSLK), and 520–540 (LSPN…GAWN). The segment covering 449 to 468 (FHSHMKDDAQWSCQKKDTCR) has biased composition (basic and acidic residues). Phosphoserine occurs at positions 490 and 521.

In terms of assembly, interacts (via N- and C-terminal domains) with SMC3 (via central hinge region). In terms of tissue distribution, widely expressed.

In terms of biological role, competes with SMC1 for binding to SMC3. May affect the availability of SMC3 to engage in the formation of multimeric protein complexes. The protein is Protein hinderin (KIAA1328) of Homo sapiens (Human).